Here is a 443-residue protein sequence, read N- to C-terminus: GTPase Der (443 aa).

EngA-type G domains are found at residues Pro3–Glu167 and Val176–Met349. GTP is bound by residues Gly9–Ser16, Asp56–Phe60, Asn119–Glu122, Gly182–Ser189, Asp229–Met233, and Asn294–Asp297. Positions Ala350–Lys434 constitute a KH-like domain.

The protein belongs to the TRAFAC class TrmE-Era-EngA-EngB-Septin-like GTPase superfamily. EngA (Der) GTPase family. As to quaternary structure, associates with the 50S ribosomal subunit.

GTPase that plays an essential role in the late steps of ribosome biogenesis. This is GTPase Der from Dechloromonas aromatica (strain RCB).